The chain runs to 664 residues: Phosphomethylpyrimidine synthase (664 aa).

Composition is skewed to polar residues over residues 1–10 (MSTEPLSINP) and 17–27 (SATQEPSTSSK). Positions 1–37 (MSTEPLSINPLSAKPLSATQEPSTSSKPSRREQRAAA) are disordered. Residues Asn-261, Met-290, Tyr-319, His-355, 375 to 377 (SRG), 416 to 419 (DGLR), and Glu-455 each bind substrate. His-459 is a binding site for Zn(2+). Tyr-482 lines the substrate pocket. His-523 is a binding site for Zn(2+). Residues Cys-603, Cys-606, and Cys-611 each contribute to the [4Fe-4S] cluster site.

The protein belongs to the ThiC family. In terms of assembly, homodimer. [4Fe-4S] cluster is required as a cofactor.

The enzyme catalyses 5-amino-1-(5-phospho-beta-D-ribosyl)imidazole + S-adenosyl-L-methionine = 4-amino-2-methyl-5-(phosphooxymethyl)pyrimidine + CO + 5'-deoxyadenosine + formate + L-methionine + 3 H(+). The protein operates within cofactor biosynthesis; thiamine diphosphate biosynthesis. In terms of biological role, catalyzes the synthesis of the hydroxymethylpyrimidine phosphate (HMP-P) moiety of thiamine from aminoimidazole ribotide (AIR) in a radical S-adenosyl-L-methionine (SAM)-dependent reaction. The sequence is that of Phosphomethylpyrimidine synthase from Pectobacterium atrosepticum (strain SCRI 1043 / ATCC BAA-672) (Erwinia carotovora subsp. atroseptica).